The chain runs to 350 residues: C5a anaphylatoxin chemotactic receptor 1 (350 aa).

Residues 1 to 37 (MDSFNYTTPDYGHYDDKDTLDLNTPVDKTSNTLRVPD) lie on the Extracellular side of the membrane. Residue asparagine 5 is glycosylated (N-linked (GlcNAc...) asparagine). The required for CHIPS binding stretch occupies residues 10–18 (DYGHYDDKD). 2 positions are modified to sulfotyrosine: tyrosine 11 and tyrosine 14. Residues 21–30 (DLNTPVDKTS) are involved in C5a binding. A helical transmembrane segment spans residues 38 to 64 (ILALVIFAVVFLVGVLGNALVVWVTAF). The Cytoplasmic segment spans residues 65–69 (EAKRT). Residues 70–93 (INAIWFLNLAVADFLSCLALPILF) traverse the membrane as a helical segment. At 94 to 110 (TSIVQHHHWPFGGAACS) the chain is on the extracellular side. A disulfide bridge links cysteine 109 with cysteine 188. A helical transmembrane segment spans residues 111 to 132 (ILPSLILLNMYASILLLATISA). The Cytoplasmic segment spans residues 133-153 (DRFLLVFKPIWCQNFRGAGLA). Residues 154–174 (WIACAVAWGLALLLTIPSFLY) form a helical membrane-spanning segment. The Extracellular portion of the chain corresponds to 175 to 200 (RVVREEYFPPKVLCGVDYSHDKRRER). Residues 201–226 (AVAIVRLVLGFLWPLLTLTICYTFIL) form a helical membrane-spanning segment. The Cytoplasmic portion of the chain corresponds to 227 to 242 (LRTWSRRATRSTKTLK). Residues 243 to 265 (VVVAVVASFFIFWLPYQVTGIMM) form a helical membrane-spanning segment. The Extracellular segment spans residues 266–282 (SFLEPSSPTFLLLKKLD). A helical membrane pass occupies residues 283 to 303 (SLCVSFAYINCCINPIIYVVA). Residues 304–350 (GQGFQGRLRKSLPSLLRNVLTEESVVRESKSFTRSTVDTMAQKTQAV) are Cytoplasmic-facing. Phosphoserine is present on residues serine 314, serine 317, serine 327, serine 332, serine 334, and serine 338.

Belongs to the G-protein coupled receptor 1 family. As to quaternary structure, homodimer. May also form higher-order oligomers. Interacts (when phosphorylated) with ARRB1 and ARRB2; the interaction is associated with internalization of C5aR. Interacts (via N-terminal domain) with S.aureus chemotaxis inhibitory protein (CHIPS); the interaction blocks the receptor and may thus inhibit the immune response. Sulfation plays a critical role in the association of C5aR with C5a, but no significant role in the ability of the receptor to transduce a signal and mobilize calcium in response to a small a small peptide agonist. Sulfation at Tyr-14 is important for CHIPS binding. Post-translationally, phosphorylated on serine residues in response to C5a binding, resulting in internalization of the receptor and short-term desensitization to the ligand. The key residues involved in this process are Ser-334 and Ser-338.

It is found in the cell membrane. The protein localises to the cytoplasmic vesicle. Functionally, receptor for the chemotactic and inflammatory peptide anaphylatoxin C5a. The ligand interacts with at least two sites on the receptor: a high-affinity site on the extracellular N-terminus, and a second site in the transmembrane region which activates downstream signaling events. Receptor activation stimulates chemotaxis, granule enzyme release, intracellular calcium release and superoxide anion production. This is C5a anaphylatoxin chemotactic receptor 1 (C5AR1) from Homo sapiens (Human).